Reading from the N-terminus, the 228-residue chain is uncharacterized protein (228 aa).

A disordered region spans residues Thr-90–Lys-115. The segment covering Ser-96 to Ser-113 has biased composition (low complexity).

The protein localises to the cytoplasm. It localises to the cell cortex. Deletion results in antifungal drug fluconazole-resistant phenotype. This is an uncharacterized protein from Saccharomyces cerevisiae (strain ATCC 204508 / S288c) (Baker's yeast).